The sequence spans 400 residues: MVSSDCSILLCDANSFFASVHQALDPGLRGRPVIVAGREATRHGIVLAASYEAKLGYGIKTGMTVREARGLCPHGVFIPPRHDLYIEFSTRILRIMRDFTPLVEPFSIDEAWLDVRGCRDLHGSPLTVARRLKQRIREEVGITTSVGLGPSKLLAKMAAEMQKPDGLTVLDYADVPGKMWPLPVRELFGIGPRMEAHLAKLGIHTIGELAGFPVEVLIKRFGVVGRILHQCARGIDYSPVDPHSLDTVKSIGHQITLPRDYRGYEEIEVVLLELAELVARRVRLGGYLGRTVAISLKDPEFHWLGRSRTLPHYTDTAGDIYAAARHLLHRHWPEWRAVRLVGVSLAGLVPATVRQEDLFGRVERQARLDRACDQLKNRYGERVIHRAVSLTGAGVLYGGS.

The UmuC domain occupies 8–191 (ILLCDANSFF…LPVRELFGIG (184 aa)). Positions 12 and 109 each coordinate Mg(2+). Glu-110 is a catalytic residue.

The protein belongs to the DNA polymerase type-Y family. In terms of assembly, monomer. Requires Mg(2+) as cofactor.

The protein resides in the cytoplasm. The enzyme catalyses DNA(n) + a 2'-deoxyribonucleoside 5'-triphosphate = DNA(n+1) + diphosphate. Its function is as follows. Poorly processive, error-prone DNA polymerase involved in untargeted mutagenesis. Copies undamaged DNA at stalled replication forks, which arise in vivo from mismatched or misaligned primer ends. These misaligned primers can be extended by PolIV. Exhibits no 3'-5' exonuclease (proofreading) activity. May be involved in translesional synthesis, in conjunction with the beta clamp from PolIII. The polypeptide is DNA polymerase IV (Moorella thermoacetica (strain ATCC 39073 / JCM 9320)).